The primary structure comprises 569 residues: Putative potassium-transporting ATPase ATP-binding subunit (569 aa).

Helical transmembrane passes span 34–54 (PVMF…LAMV) and 58–78 (IAGS…TVLF). Asp-194 serves as the catalytic 4-aspartylphosphate intermediate. ATP contacts are provided by residues Asp-231, Glu-235, 264–271 (FTAQSRMS), and Lys-282. The Mg(2+) site is built by Asp-405 and Asp-409. 3 helical membrane passes run 475 to 495 (FAII…LNVM), 503 to 523 (AILS…PLAL), and 543 to 563 (IYGL…DVLL).

Belongs to the cation transport ATPase (P-type) (TC 3.A.3) family. Type IA subfamily. As to quaternary structure, the system is composed of three essential subunits: KdpA, KdpB and KdpC.

The protein resides in the cell inner membrane. It carries out the reaction K(+)(out) + ATP + H2O = K(+)(in) + ADP + phosphate + H(+). In terms of biological role, part of the high-affinity ATP-driven potassium transport (or Kdp) system, which catalyzes the hydrolysis of ATP coupled with the electrogenic transport of potassium into the cytoplasm. This subunit is responsible for energy coupling to the transport system and for the release of the potassium ions to the cytoplasm. In Salmonella typhi, this protein is Putative potassium-transporting ATPase ATP-binding subunit.